Consider the following 273-residue polypeptide: 3-methyl-2-oxobutanoate hydroxymethyltransferase 1 (273 aa).

Mg(2+)-binding residues include Asp49 and Asp88. 3-methyl-2-oxobutanoate-binding positions include 49 to 50 (DS), Asp88, and Lys118. Glu120 contacts Mg(2+). Glu187 (proton acceptor) is an active-site residue.

The protein belongs to the PanB family. Homodecamer; pentamer of dimers. Requires Mg(2+) as cofactor.

Its subcellular location is the cytoplasm. The enzyme catalyses 3-methyl-2-oxobutanoate + (6R)-5,10-methylene-5,6,7,8-tetrahydrofolate + H2O = 2-dehydropantoate + (6S)-5,6,7,8-tetrahydrofolate. It functions in the pathway cofactor biosynthesis; (R)-pantothenate biosynthesis; (R)-pantoate from 3-methyl-2-oxobutanoate: step 1/2. In terms of biological role, catalyzes the reversible reaction in which hydroxymethyl group from 5,10-methylenetetrahydrofolate is transferred onto alpha-ketoisovalerate to form ketopantoate. The polypeptide is 3-methyl-2-oxobutanoate hydroxymethyltransferase 1 (Pseudomonas aeruginosa (strain UCBPP-PA14)).